The following is a 352-amino-acid chain: Matrix protein (352 aa).

The interval methionine 1–serine 22 is disordered. The Nuclear export signal 1 signature appears at leucine 106–valine 115. Residues arginine 244–lysine 258 carry the Nuclear localization signal motif. The short motif at leucine 268–leucine 276 is the Nuclear export signal 2 element.

The protein belongs to the morbillivirus/respirovirus/rubulavirus M protein family. In terms of assembly, homomultimer. Interacts with host TRIM6; this interaction inhibits the IKBKE-dependent activation of the type I interferon signaling pathway. Interacts with host ANP32B; this interaction promotes M nuclear localization. Ubiquitinated; regulates matrix nuclear export.

Its subcellular location is the virion. It localises to the host cytoplasm. It is found in the host cell membrane. The protein resides in the host nucleus. Its function is as follows. Plays a crucial role in virion assembly and budding. Forms a shell at the inner face of the plasma membrane. Transits through the host nucleus before gaining the functional ability to localize and bud from the plasma membrane. Mediates together with fusion protein the incorporation of the glycoprotein to the viral particles. Also participates in the inhibition of the host interferon type I antiviral response by interacting with and thereby inhibiting host TRIM6. In Cynopterus brachyotis (Lesser short-nosed fruit bat), this protein is Matrix protein (M).